Consider the following 549-residue polypeptide: Nectin-3 (549 aa).

A signal peptide spans 1–57; sequence MARTLRPSPLCPGGGKAQLSSASLLGAGLLLQPPTPPPLLLLLFPLLLFSRLCGALA. The Extracellular segment spans residues 58-404; sequence GPIIVEPHVT…ATIKDDTIAT (347 aa). The region spanning 59 to 165 is the Ig-like V-type domain; sequence PIIVEPHVTA…GNAQSSTTVT (107 aa). N-linked (GlcNAc...) asparagine glycans are attached at residues asparagine 73, asparagine 83, asparagine 125, asparagine 186, asparagine 222, and asparagine 331. A disulfide bridge links cysteine 78 with cysteine 148. 2 Ig-like C2-type domains span residues 170-258 and 269-354; these read PTVS…KDIR and PEVS…KVIY. 2 cysteine pairs are disulfide-bonded: cysteine 193–cysteine 246 and cysteine 291–cysteine 338. Residues 405-425 traverse the membrane as a helical segment; it reads IIASVVGGALFIVLVSVLAGI. The Cytoplasmic segment spans residues 426–549; that stretch reads FCYRRRRTFR…SVISRREWYV (124 aa).

The protein belongs to the nectin family. Cis- and trans-homodimer. Can form trans-heterodimers with NECTIN1, NECTIN2, PVR, IGSF4B/Necl-1 and with IGSF4. Interaction between NECTIN1 and NECTIN3 on the pre- and postsynaptic sites, respectively, initiates the formation of puncta adherentia junctions between axons and dendrites. Interacts (via Cytoplasmic domain) with AFDN, providing a connection with the actin cytoskeleton. Binds with low affinity to TIGIT. In terms of assembly, (Microbial infection) Interacts with C.difficile toxin TcdB, suggesting that it may contribute to TcdB toxin entry into cells. It was however shown that NECTIN3/PVRL3 does not act as a major receptor for TcdB. Predominantly expressed in testis and placenta as well as in many cell lines, including epithelial cell lines.

The protein resides in the cell membrane. Its subcellular location is the postsynaptic cell membrane. The protein localises to the cell junction. It localises to the adherens junction. In terms of biological role, cell adhesion molecule that promotes cell-cell adhesion through heterophilic trans-interactions with nectins-like or other nectins, such as trans-interaction with NECTIN2 at Sertoli-spermatid junctions. Trans-interaction with PVR induces activation of CDC42 and RAC small G proteins through common signaling molecules such as SRC and RAP1. Induces endocytosis-mediated down-regulation of PVR from the cell surface, resulting in reduction of cell movement and proliferation. Involved in axon guidance by promoting contacts between the commissural axons and the floor plate cells. Also involved in the formation of cell-cell junctions, including adherens junctions and synapses. Promotes formation of checkerboard-like cellular pattern of hair cells and supporting cells in the auditory epithelium via heterophilic interaction with NECTIN1: NECTIN1 is present in the membrane of hair cells and associates with NECTIN3 on supporting cells, thereby mediating heterotypic adhesion between these two cell types. Plays a role in the morphology of the ciliary body. In Homo sapiens (Human), this protein is Nectin-3.